A 414-amino-acid polypeptide reads, in one-letter code: Gamma-glutamyl phosphate reductase (414 aa).

The protein belongs to the gamma-glutamyl phosphate reductase family.

The protein resides in the cytoplasm. The enzyme catalyses L-glutamate 5-semialdehyde + phosphate + NADP(+) = L-glutamyl 5-phosphate + NADPH + H(+). Its pathway is amino-acid biosynthesis; L-proline biosynthesis; L-glutamate 5-semialdehyde from L-glutamate: step 2/2. Catalyzes the NADPH-dependent reduction of L-glutamate 5-phosphate into L-glutamate 5-semialdehyde and phosphate. The product spontaneously undergoes cyclization to form 1-pyrroline-5-carboxylate. This is Gamma-glutamyl phosphate reductase from Thermoanaerobacter sp. (strain X514).